A 120-amino-acid chain; its full sequence is Putative pterin-4-alpha-carbinolamine dehydratase (120 aa).

This sequence belongs to the pterin-4-alpha-carbinolamine dehydratase family.

The catalysed reaction is (4aS,6R)-4a-hydroxy-L-erythro-5,6,7,8-tetrahydrobiopterin = (6R)-L-erythro-6,7-dihydrobiopterin + H2O. The sequence is that of Putative pterin-4-alpha-carbinolamine dehydratase from Bdellovibrio bacteriovorus (strain ATCC 15356 / DSM 50701 / NCIMB 9529 / HD100).